The following is a 158-amino-acid chain: 6,7-dimethyl-8-ribityllumazine synthase (158 aa).

Residues Phe-23, 61–63 (SFE), and 85–87 (AVI) contribute to the 5-amino-6-(D-ribitylamino)uracil site. 90 to 91 (ET) contacts (2S)-2-hydroxy-3-oxobutyl phosphate. The Proton donor role is filled by His-93. Position 118 (Phe-118) interacts with 5-amino-6-(D-ribitylamino)uracil. Arg-132 contributes to the (2S)-2-hydroxy-3-oxobutyl phosphate binding site.

The protein belongs to the DMRL synthase family.

It carries out the reaction (2S)-2-hydroxy-3-oxobutyl phosphate + 5-amino-6-(D-ribitylamino)uracil = 6,7-dimethyl-8-(1-D-ribityl)lumazine + phosphate + 2 H2O + H(+). It functions in the pathway cofactor biosynthesis; riboflavin biosynthesis; riboflavin from 2-hydroxy-3-oxobutyl phosphate and 5-amino-6-(D-ribitylamino)uracil: step 1/2. In terms of biological role, catalyzes the formation of 6,7-dimethyl-8-ribityllumazine by condensation of 5-amino-6-(D-ribitylamino)uracil with 3,4-dihydroxy-2-butanone 4-phosphate. This is the penultimate step in the biosynthesis of riboflavin. The polypeptide is 6,7-dimethyl-8-ribityllumazine synthase (Prochlorococcus marinus (strain AS9601)).